Here is a 373-residue protein sequence, read N- to C-terminus: 3-dehydroquinate synthase (373 aa).

NAD(+)-binding positions include 67–72, 101–105, 125–126, Lys138, and Lys147; these read EGEETK, GVILD, and TT. Positions 180, 240, and 256 each coordinate Zn(2+).

The protein belongs to the sugar phosphate cyclases superfamily. Dehydroquinate synthase family. NAD(+) is required as a cofactor. It depends on Co(2+) as a cofactor. The cofactor is Zn(2+).

It is found in the cytoplasm. It catalyses the reaction 7-phospho-2-dehydro-3-deoxy-D-arabino-heptonate = 3-dehydroquinate + phosphate. The protein operates within metabolic intermediate biosynthesis; chorismate biosynthesis; chorismate from D-erythrose 4-phosphate and phosphoenolpyruvate: step 2/7. In terms of biological role, catalyzes the conversion of 3-deoxy-D-arabino-heptulosonate 7-phosphate (DAHP) to dehydroquinate (DHQ). The protein is 3-dehydroquinate synthase of Chlamydia trachomatis serovar A (strain ATCC VR-571B / DSM 19440 / HAR-13).